The chain runs to 477 residues: Bifunctional protein HldE (477 aa).

The ribokinase stretch occupies residues 1–318 (MKVTLPEFER…ENAVRGRADT (318 aa)). Lys179 carries the post-translational modification N6-acetyllysine. 195 to 198 (NLSE) is an ATP binding site. Asp264 is a catalytic residue. A cytidylyltransferase region spans residues 344–477 (MTNGVFDILH…IKKIQQDKKG (134 aa)).

It in the N-terminal section; belongs to the carbohydrate kinase PfkB family. In the C-terminal section; belongs to the cytidylyltransferase family. In terms of assembly, homodimer.

It carries out the reaction D-glycero-beta-D-manno-heptose 7-phosphate + ATP = D-glycero-beta-D-manno-heptose 1,7-bisphosphate + ADP + H(+). The enzyme catalyses D-glycero-beta-D-manno-heptose 1-phosphate + ATP + H(+) = ADP-D-glycero-beta-D-manno-heptose + diphosphate. Its pathway is nucleotide-sugar biosynthesis; ADP-L-glycero-beta-D-manno-heptose biosynthesis; ADP-L-glycero-beta-D-manno-heptose from D-glycero-beta-D-manno-heptose 7-phosphate: step 1/4. It participates in nucleotide-sugar biosynthesis; ADP-L-glycero-beta-D-manno-heptose biosynthesis; ADP-L-glycero-beta-D-manno-heptose from D-glycero-beta-D-manno-heptose 7-phosphate: step 3/4. Catalyzes the phosphorylation of D-glycero-D-manno-heptose 7-phosphate at the C-1 position to selectively form D-glycero-beta-D-manno-heptose-1,7-bisphosphate. Functionally, catalyzes the ADP transfer from ATP to D-glycero-beta-D-manno-heptose 1-phosphate, yielding ADP-D-glycero-beta-D-manno-heptose. The sequence is that of Bifunctional protein HldE from Shigella sonnei (strain Ss046).